The chain runs to 274 residues: Thiamine kinase (274 aa).

It belongs to the thiamine kinase family.

The catalysed reaction is thiamine + ATP = thiamine phosphate + ADP + H(+). The protein operates within cofactor biosynthesis; thiamine diphosphate biosynthesis; thiamine phosphate from thiamine: step 1/1. Catalyzes the ATP-dependent phosphorylation of thiamine to thiamine phosphate. Is involved in thiamine salvage. In Escherichia coli O81 (strain ED1a), this protein is Thiamine kinase.